A 28-amino-acid polypeptide reads, in one-letter code: Gastrin-releasing peptide (28 aa).

Met-28 carries the post-translational modification Methionine amide.

The protein belongs to the bombesin/neuromedin-B/ranatensin family.

The protein localises to the secreted. The protein resides in the cytoplasmic vesicle. It is found in the secretory vesicle lumen. In terms of biological role, stimulates the release of gastrin and other gastrointestinal hormones. The chain is Gastrin-releasing peptide (GRP) from Alligator mississippiensis (American alligator).